The sequence spans 134 residues: Lymphocyte antigen 6G (134 aa).

An N-terminal signal peptide occupies residues 1-26 (MDTCHIAKSCVLILLVVLLCAERAQG). One can recognise a UPAR/Ly6 domain in the interval 27-118 (LECYNCIGVP…PTGGSSWTMA (92 aa)). 5 cysteine pairs are disulfide-bonded: Cys29-Cys53, Cys32-Cys41, Cys46-Cys74, Cys78-Cys98, and Cys99-Cys104. Asn105 carries GPI-anchor amidated asparagine lipidation. Positions 106–134 (AAVPTGGSSWTMAGVLLFSLVSVLLQTFL) are cleaved as a propeptide — removed in mature form.

In terms of tissue distribution, expressed in bone marrow.

The protein localises to the cell membrane. This is Lymphocyte antigen 6G (Ly6g) from Mus musculus (Mouse).